Here is a 345-residue protein sequence, read N- to C-terminus: Holliday junction branch migration complex subunit RuvB (345 aa).

The interval 1–186 (MSTDPDEREV…FGFTAHMDFY (186 aa)) is large ATPase domain (RuvB-L). ATP is bound by residues L25, R26, G67, K70, T71, S72, 133–135 (EDF), R176, Y186, and R223. T71 lines the Mg(2+) pocket. The small ATPAse domain (RuvB-S) stretch occupies residues 187–257 (EPAELERVLV…VAKAALAVYD (71 aa)). The tract at residues 260–345 (ELGLDRLDRA…AGANQPGLFE (86 aa)) is head domain (RuvB-H). The DNA site is built by R315 and R320.

Belongs to the RuvB family. As to quaternary structure, homohexamer. Forms an RuvA(8)-RuvB(12)-Holliday junction (HJ) complex. HJ DNA is sandwiched between 2 RuvA tetramers; dsDNA enters through RuvA and exits via RuvB. An RuvB hexamer assembles on each DNA strand where it exits the tetramer. Each RuvB hexamer is contacted by two RuvA subunits (via domain III) on 2 adjacent RuvB subunits; this complex drives branch migration. In the full resolvosome a probable DNA-RuvA(4)-RuvB(12)-RuvC(2) complex forms which resolves the HJ.

It is found in the cytoplasm. The catalysed reaction is ATP + H2O = ADP + phosphate + H(+). Functionally, the RuvA-RuvB-RuvC complex processes Holliday junction (HJ) DNA during genetic recombination and DNA repair, while the RuvA-RuvB complex plays an important role in the rescue of blocked DNA replication forks via replication fork reversal (RFR). RuvA specifically binds to HJ cruciform DNA, conferring on it an open structure. The RuvB hexamer acts as an ATP-dependent pump, pulling dsDNA into and through the RuvAB complex. RuvB forms 2 homohexamers on either side of HJ DNA bound by 1 or 2 RuvA tetramers; 4 subunits per hexamer contact DNA at a time. Coordinated motions by a converter formed by DNA-disengaged RuvB subunits stimulates ATP hydrolysis and nucleotide exchange. Immobilization of the converter enables RuvB to convert the ATP-contained energy into a lever motion, pulling 2 nucleotides of DNA out of the RuvA tetramer per ATP hydrolyzed, thus driving DNA branch migration. The RuvB motors rotate together with the DNA substrate, which together with the progressing nucleotide cycle form the mechanistic basis for DNA recombination by continuous HJ branch migration. Branch migration allows RuvC to scan DNA until it finds its consensus sequence, where it cleaves and resolves cruciform DNA. The chain is Holliday junction branch migration complex subunit RuvB from Mycobacterium marinum (strain ATCC BAA-535 / M).